The following is a 201-amino-acid chain: Retinol-binding protein 4 (201 aa).

A signal peptide spans 1–18 (MKWVWALLLLAALGSGRA). Intrachain disulfides connect cysteine 22/cysteine 178, cysteine 88/cysteine 192, and cysteine 138/cysteine 147. Position 116 (glutamine 116) interacts with substrate. An Omega-N-methylarginine modification is found at arginine 139.

This sequence belongs to the calycin superfamily. Lipocalin family. Interacts with TTR. Interaction with TTR prevents its loss by filtration through the kidney glomeruli. Interacts with STRA6. In terms of tissue distribution, detected in blood plasma and in urine (at protein level).

It is found in the secreted. Functionally, retinol-binding protein that mediates retinol transport in blood plasma. Delivers retinol from the liver stores to the peripheral tissues. Transfers the bound all-trans retinol to STRA6, that then facilitates retinol transport across the cell membrane. The sequence is that of Retinol-binding protein 4 (RBP4) from Homo sapiens (Human).